The chain runs to 546 residues: Chaperonin GroEL (546 aa).

Residues 30 to 33 (TLGP), Lys-51, 87 to 91 (DGTTT), Gly-415, 479 to 481 (NAA), and Asp-495 contribute to the ATP site.

The protein belongs to the chaperonin (HSP60) family. As to quaternary structure, forms a cylinder of 14 subunits composed of two heptameric rings stacked back-to-back. Interacts with the co-chaperonin GroES.

The protein resides in the cytoplasm. The enzyme catalyses ATP + H2O + a folded polypeptide = ADP + phosphate + an unfolded polypeptide.. Its function is as follows. Together with its co-chaperonin GroES, plays an essential role in assisting protein folding. The GroEL-GroES system forms a nano-cage that allows encapsulation of the non-native substrate proteins and provides a physical environment optimized to promote and accelerate protein folding. This is Chaperonin GroEL from Xanthomonas campestris pv. phaseoli.